A 310-amino-acid chain; its full sequence is 4-hydroxyproline epimerase (310 aa).

The Proton acceptor role is filled by cysteine 88. Substrate is bound by residues 89–90 (GH), histidine 208, and aspartate 232. The active-site Proton donor is the cysteine 236. 237–238 (GT) contacts substrate.

It belongs to the proline racemase family. In terms of assembly, homodimer.

It catalyses the reaction trans-4-hydroxy-L-proline = cis-4-hydroxy-D-proline. Inhibited by iodoacetate, iodoacetamide and by high amounts (10 mM) of pyrrole-2-carboxylic acid (PYC). Not inhibited by PYC at 1 mM. Functionally, allows intracellular utilization of 4-hydroxyproline, one of the major constituents of host collagen, by converting 4-hydroxy-L-proline to 4-hydroxy-D-proline, which can be further metabolized by intracellular 4-hydroxy-D-proline oxidases. The sequence is that of 4-hydroxyproline epimerase from Burkholderia pseudomallei (strain K96243).